The chain runs to 404 residues: Proteasomal ubiquitin receptor ADRM1-A (404 aa).

The region spanning 17-130 (SSSKYLVEFR…RKLNEYLNNP (114 aa)) is the Pru domain. A compositionally biased stretch (low complexity) spans 195–247 (GSGGPTTSSSSSSSRSQSAAVTPSSTTSSTRTTSAPVAPAAAPATTPSPAVSS). Disordered regions lie at residues 195–258 (GSGG…TSPT) and 376–404 (FAKA…MSLD). The span at 248–258 (NDGASEATSPT) shows a compositional bias: polar residues. Positions 278–390 (TGEGGQQVDL…QSTSSQKERE (113 aa)) constitute a DEUBAD domain. Over residues 386–395 (QKERESSEKK) the composition is skewed to basic and acidic residues.

It belongs to the ADRM1 family. As to quaternary structure, component of the 19S proteasome regulatory particle complex. The 26S proteasome consists of a 20S core particle (CP) and two 19S regulatory subunits (RP).

It is found in the cytoplasm. It localises to the nucleus. Functionally, component of the 26S proteasome, a multiprotein complex involved in the ATP-dependent degradation of ubiquitinated proteins. This complex plays a key role in the maintenance of protein homeostasis by removing misfolded or damaged proteins, which could impair cellular functions, and by removing proteins whose functions are no longer required. Therefore, the proteasome participates in numerous cellular processes, including cell cycle progression, apoptosis, or DNA damage repair. Within the complex, functions as a proteasomal ubiquitin receptor. This Xenopus laevis (African clawed frog) protein is Proteasomal ubiquitin receptor ADRM1-A (adrm1-a).